A 347-amino-acid chain; its full sequence is Guanine nucleotide-binding protein subunit beta (347 aa).

WD repeat units follow at residues 60–90 (GHLA…LVWD), 102–132 (LRSS…SIYN), 148–177 (SHTG…ILWD), 189–219 (DHNG…KLWD), 231–261 (GHEA…RLFD), 275–305 (NILC…NVWD), and 317–347 (GHGN…KIWA).

Belongs to the WD repeat G protein beta family. G proteins are composed of 3 units, alpha, beta and gamma. Interacts with gpgA, and this requires phlp1.

It is found in the cytoplasm. It localises to the cell membrane. In terms of biological role, guanine nucleotide-binding proteins (G proteins) are involved as a modulator or transducer in various transmembrane signaling systems. The beta and gamma chains are required for the GTPase activity, for replacement of GDP by GTP, and for G protein-effector interaction. Required for normal chemotaxis in response to cAMP and for aggregation during scorocarp development. The sequence is that of Guanine nucleotide-binding protein subunit beta (gpbA) from Dictyostelium discoideum (Social amoeba).